Consider the following 513-residue polypeptide: GTPase Obg (513 aa).

One can recognise an Obg domain in the interval 3–160 (THFVDRVVVH…LDLHLEVKTL (158 aa)). Residues 161–337 (ADVALVGFPS…LSFAMAELVS (177 aa)) form the OBG-type G domain. Residues 167–174 (GFPSAGKS), 192–196 (FTTLV), 213–216 (DVPG), 289–292 (NKAD), and 318–320 (SAV) contribute to the GTP site. Serine 174 and threonine 194 together coordinate Mg(2+). The OCT domain occupies 355–444 (PRAVDDQGFK…ANAVVFDWEP (90 aa)). Residues 457-513 (GSDLRLEDHSRPTRDEKRLQERERRAAKVTARDELEAERRAGHWTAADEADEELSQR) form a disordered region. The segment covering 458–497 (SDLRLEDHSRPTRDEKRLQERERRAAKVTARDELEAERRA) has biased composition (basic and acidic residues). Acidic residues predominate over residues 504 to 513 (DEADEELSQR).

This sequence belongs to the TRAFAC class OBG-HflX-like GTPase superfamily. OBG GTPase family. In terms of assembly, monomer. Requires Mg(2+) as cofactor.

It localises to the cytoplasm. Its function is as follows. An essential GTPase which binds GTP, GDP and possibly (p)ppGpp with moderate affinity, with high nucleotide exchange rates and a fairly low GTP hydrolysis rate. Plays a role in control of the cell cycle, stress response, ribosome biogenesis and in those bacteria that undergo differentiation, in morphogenesis control. This chain is GTPase Obg, found in Kineococcus radiotolerans (strain ATCC BAA-149 / DSM 14245 / SRS30216).